Here is a 152-residue protein sequence, read N- to C-terminus: Xanthine-guanine phosphoribosyltransferase (152 aa).

5-phospho-alpha-D-ribose 1-diphosphate-binding positions include 37 to 38, R69, and 88 to 96; these read RG and DDLVDTGGT. Position 69 (R69) interacts with GMP. A Mg(2+)-binding site is contributed by D89. Residues D92 and I135 each contribute to the guanine site. Xanthine-binding residues include D92 and I135. GMP contacts are provided by residues 92-96 and 134-135; these read DTGGT and WI.

This sequence belongs to the purine/pyrimidine phosphoribosyltransferase family. XGPT subfamily. As to quaternary structure, homotetramer. Mg(2+) is required as a cofactor.

The protein localises to the cell inner membrane. It catalyses the reaction GMP + diphosphate = guanine + 5-phospho-alpha-D-ribose 1-diphosphate. It carries out the reaction XMP + diphosphate = xanthine + 5-phospho-alpha-D-ribose 1-diphosphate. The enzyme catalyses IMP + diphosphate = hypoxanthine + 5-phospho-alpha-D-ribose 1-diphosphate. The protein operates within purine metabolism; GMP biosynthesis via salvage pathway; GMP from guanine: step 1/1. Its pathway is purine metabolism; XMP biosynthesis via salvage pathway; XMP from xanthine: step 1/1. Functionally, purine salvage pathway enzyme that catalyzes the transfer of the ribosyl-5-phosphate group from 5-phospho-alpha-D-ribose 1-diphosphate (PRPP) to the N9 position of the 6-oxopurines guanine and xanthine to form the corresponding ribonucleotides GMP (guanosine 5'-monophosphate) and XMP (xanthosine 5'-monophosphate), with the release of PPi. To a lesser extent, also acts on hypoxanthine. The protein is Xanthine-guanine phosphoribosyltransferase of Enterobacter sp. (strain 638).